The following is a 436-amino-acid chain: GTPase Der (436 aa).

EngA-type G domains are found at residues P4–G167 and I176–A351. GTP is bound by residues G10–S17, D57–I61, N119–D122, G182–S189, D229–M233, and N294–D297. The 85-residue stretch at M352–K436 folds into the KH-like domain.

The protein belongs to the TRAFAC class TrmE-Era-EngA-EngB-Septin-like GTPase superfamily. EngA (Der) GTPase family. In terms of assembly, associates with the 50S ribosomal subunit.

Its function is as follows. GTPase that plays an essential role in the late steps of ribosome biogenesis. In Geobacillus kaustophilus (strain HTA426), this protein is GTPase Der.